The following is a 246-amino-acid chain: Polyhedrin (246 aa).

This sequence belongs to the polyhedrin family.

In terms of biological role, major component of the virus occlusion bodies, which are large proteinaceous structures (polyhedra), that protect the virus from the outside environment for extended periods until they are ingested by insect larvae. The sequence is that of Polyhedrin (PH) from Spodoptera exigua nuclear polyhedrosis virus (strain US) (SeMNPV).